Reading from the N-terminus, the 265-residue chain is Mlc titration factor A (265 aa).

H111, H148, H152, and E211 together coordinate Zn(2+).

It belongs to the MtfA family. Interacts with Mlc. The cofactor is Zn(2+).

Its subcellular location is the cytoplasm. Involved in the modulation of the activity of the glucose-phosphotransferase system (glucose-PTS). Interacts with the transcriptional repressor Mlc, preventing its interaction with DNA and leading to the modulation of expression of genes regulated by Mlc, including ptsG, which encodes the PTS system glucose-specific EIICB component. Functionally, shows zinc-dependent metallopeptidase activity. The chain is Mlc titration factor A from Escherichia coli O17:K52:H18 (strain UMN026 / ExPEC).